A 345-amino-acid polypeptide reads, in one-letter code: Phosphoribosylformylglycinamidine cyclo-ligase (345 aa).

The protein belongs to the AIR synthase family.

The protein resides in the cytoplasm. The catalysed reaction is 2-formamido-N(1)-(5-O-phospho-beta-D-ribosyl)acetamidine + ATP = 5-amino-1-(5-phospho-beta-D-ribosyl)imidazole + ADP + phosphate + H(+). Its pathway is purine metabolism; IMP biosynthesis via de novo pathway; 5-amino-1-(5-phospho-D-ribosyl)imidazole from N(2)-formyl-N(1)-(5-phospho-D-ribosyl)glycinamide: step 2/2. The protein is Phosphoribosylformylglycinamidine cyclo-ligase of Ligilactobacillus salivarius (strain UCC118) (Lactobacillus salivarius).